Consider the following 208-residue polypeptide: Large ribosomal subunit protein bL25 (208 aa).

It belongs to the bacterial ribosomal protein bL25 family. CTC subfamily. In terms of assembly, part of the 50S ribosomal subunit; part of the 5S rRNA/L5/L18/L25 subcomplex. Contacts the 5S rRNA. Binds to the 5S rRNA independently of L5 and L18.

This is one of the proteins that binds to the 5S RNA in the ribosome where it forms part of the central protuberance. This Leptothrix cholodnii (strain ATCC 51168 / LMG 8142 / SP-6) (Leptothrix discophora (strain SP-6)) protein is Large ribosomal subunit protein bL25.